We begin with the raw amino-acid sequence, 171 residues long: Large ribosomal subunit protein uL10 (171 aa).

Belongs to the universal ribosomal protein uL10 family. Part of the ribosomal stalk of the 50S ribosomal subunit. The N-terminus interacts with L11 and the large rRNA to form the base of the stalk. The C-terminus forms an elongated spine to which L12 dimers bind in a sequential fashion forming a multimeric L10(L12)X complex.

Forms part of the ribosomal stalk, playing a central role in the interaction of the ribosome with GTP-bound translation factors. The polypeptide is Large ribosomal subunit protein uL10 (Corynebacterium jeikeium (strain K411)).